The primary structure comprises 462 residues: Protein ultraspiracle homolog (462 aa).

The modulating stretch occupies residues 1-113 (MSSVAKKDKR…NHPLSGSKHL (113 aa)). 2 consecutive NR C4-type zinc fingers follow at residues 114-134 (CSIC…CEGC) and 150-174 (CRED…YQKC). The segment at residues 114 to 179 (CSICGDRASG…RYQKCLACGM (66 aa)) is a DNA-binding region (nuclear receptor). The segment at 180–201 (KREAVQEERQRAARRTEDAHPS) is hinge. Residues 204-453 (VQELSIERLL…SYIRDALCNH (250 aa)) form the NR LBD domain.

The protein belongs to the nuclear hormone receptor family. NR2 subfamily. As to quaternary structure, heterodimer of USP and ECR. As to expression, abundant expression seen in males and ovaries.

The protein resides in the nucleus. This is Protein ultraspiracle homolog (USP) from Bombyx mori (Silk moth).